Here is a 1488-residue protein sequence, read N- to C-terminus: Phenolphthiocerol/phthiocerol polyketide synthase subunit E (1488 aa).

Residues 5–438 (ENAIAVVGMA…GTNAHVVLEE (434 aa)) form the Ketosynthase family 3 (KS3) domain. Catalysis depends on for beta-ketoacyl synthase activity residues Cys-184, His-320, and His-361. The acyltransferase stretch occupies residues 551 to 868 (VFLFPGQGAQ…GELWSAGVEV (318 aa)). The active-site For malonyltransferase activity is the Ser-641. The 75-residue stretch at 930–1004 (NGESQTEVTL…SLTAAVDASF (75 aa)) folds into the Carrier domain. Ser-965 is modified (O-(pantetheine 4'-phosphoryl)serine). 1286–1331 (EGVVAVELEGEGRSVLRPDVDLRRTVGWFTTYYPVPLACATGLGAL) is an NADP(+) binding site.

The cofactor is NADP(+). Requires pantetheine 4'-phosphate as cofactor.

The enzyme catalyses icosanoyl-[(phenol)carboxyphthiodiolenone synthase] + 2 (S)-methylmalonyl-CoA + 3 malonyl-CoA + 5 NADPH + 10 H(+) = C32-carboxyphthiodiolenone-[(phenol)carboxyphthiodiolenone synthase] + 5 CO2 + 5 NADP(+) + 5 CoA + 2 H2O. It catalyses the reaction docosanoyl-[(phenol)carboxyphthiodiolenone synthase] + 2 (S)-methylmalonyl-CoA + 3 malonyl-CoA + 5 NADPH + 10 H(+) = C34-carboxyphthiodiolenone-[(phenol)carboxyphthiodiolenone synthase] + 5 CO2 + 5 NADP(+) + 5 CoA + 2 H2O. It carries out the reaction 17-(4-hydroxyphenyl)heptadecanoyl-[(phenol)carboxyphthiodiolenone synthase] + 2 (S)-methylmalonyl-CoA + 3 malonyl-CoA + 5 NADPH + 10 H(+) = C35-(phenol)carboxyphthiodiolenone-[(phenol)carboxyphthiodiolenone synthase] + 5 CO2 + 5 NADP(+) + 5 CoA + 2 H2O. The catalysed reaction is 19-(4-hydroxyphenyl)nonadecanoyl-[(phenol)carboxyphthiodiolenone synthase] + 2 (S)-methylmalonyl-CoA + 3 malonyl-CoA + 5 NADPH + 10 H(+) = C37-(phenol)carboxyphthiodiolenone-[(phenol)carboxyphthiodiolenone synthase] + 5 CO2 + 5 NADP(+) + 5 CoA + 2 H2O. It functions in the pathway lipid metabolism; fatty acid biosynthesis. Functionally, part of the PpsABCDE complex involved in the biosynthesis of the lipid core common to phthiocerols and phenolphthiocerols by successive additions of malonyl-CoA or methylmalonyl-CoA extender units. PpsA can accept as substrate the activated forms of either icosanoyl (C20), docosanoyl (C22) or lignoceroyl (C24) groups from FadD26, or a (4-hydroxyphenyl)-C17 or (4-hydroxyphenyl)-C19 fatty acyl from FadD29. PpsA initiates the biosynthesis and extends its substrate using a malonyl-CoA extender unit. The PpsB and PpsC proteins add the second and third malonyl-CoA extender units. PpsD adds an (R)-methylmalonyl unit and PpsE adds a second (R)-methylmalonyl unit. The incorporation of the methylmalonyl units results in formation of two branched methyl groups in the elongated product. The chain is Phenolphthiocerol/phthiocerol polyketide synthase subunit E (ppsE) from Mycobacterium bovis (strain ATCC BAA-935 / AF2122/97).